The primary structure comprises 952 residues: Anion exchange protein 4 (952 aa).

The interval 1–41 (MKLPGQGDFESSDAHENAHSEEPDSGLGPGPGLNGPSGIDI) is disordered. The segment covering 12 to 22 (SDAHENAHSEE) has biased composition (basic and acidic residues). A run of 4 helical transmembrane segments spans residues 385–405 (AVFY…GLLG), 413–433 (GVLE…LMAG), 470–490 (VGIW…SLLV), and 501–521 (FCAL…LNLI). 2 N-linked (GlcNAc...) asparagine glycosylation sites follow: asparagine 546 and asparagine 569. 7 helical membrane-spanning segments follow: residues 593 to 613 (VPDI…CAIA), 634 to 654 (FSSV…GLAT), 681 to 701 (PWWL…LIFM), 727 to 747 (LFCV…WYVS), 784 to 804 (GLVV…LKFI), 807 to 827 (PVLY…IQFV), and 870 to 890 (VVKS…LVAI). Positions 915–938 (ETIPENRSEPEHLFSGNDSEDSEL) are disordered. N-linked (GlcNAc...) asparagine glycans are attached at residues asparagine 920, asparagine 931, and asparagine 948.

Belongs to the anion exchanger (TC 2.A.31) family. As to expression, expressed in submandibular gland (SMG) duct and cortical collecting duct (CCD) of kidney. Lower expressed in duodenal villi.

It is found in the basolateral cell membrane. The catalysed reaction is 2 hydrogencarbonate(out) + chloride(in) + Na(+)(out) = 2 hydrogencarbonate(in) + chloride(out) + Na(+)(in). It carries out the reaction K(+)(in) + 2 hydrogencarbonate(in) + chloride(out) = K(+)(out) + 2 hydrogencarbonate(out) + chloride(in). The enzyme catalyses Li(+)(in) + 2 hydrogencarbonate(in) + chloride(out) = Li(+)(out) + 2 hydrogencarbonate(out) + chloride(in). It catalyses the reaction Rb(+)(in) + 2 hydrogencarbonate(in) + chloride(out) = Rb(+)(out) + 2 hydrogencarbonate(out) + chloride(in). The catalysed reaction is Cs(+)(in) + 2 hydrogencarbonate(in) + chloride(out) = Cs(+)(out) + 2 hydrogencarbonate(out) + chloride(in). Its activity is regulated as follows. Cl(-)/HCO3(-) exchanger activity is substantially increased in response to 5 uM isoproterenol. Cl(-)/HCO3(-) exchanger activity is increased by both forskolin and coexpression with the catalytic subunit alpha of PKA. Functionally, electroneutral Cl(-)/HCO3(-) antiporter that favors chloride ion entry and efflux of hydrogencarbonate and sodium ion across the basolateral membrane and may participate in salivary secretion. Also mediates Cl(-)/HCO3(-) exchange activity in the presence of K(+) as well as Cs(+), Li(+), and Rb(+). Does not contribute to Cl(-)/HCO3(-) exchanger in the apical membrane of the upper villous epithelium. The polypeptide is Anion exchange protein 4 (Mus musculus (Mouse)).